The following is a 254-amino-acid chain: Probable phosphomannomutase (254 aa).

Aspartate 14 (nucleophile) is an active-site residue. Aspartate 14 and aspartate 16 together coordinate Mg(2+). The Proton donor/acceptor role is filled by aspartate 16. 6 residues coordinate alpha-D-mannose 1-phosphate: arginine 23, arginine 129, arginine 140, arginine 147, serine 185, and aspartate 187. Mg(2+)-binding residues include aspartate 214, phenylalanine 226, aspartate 228, and threonine 231.

Belongs to the eukaryotic PMM family. In terms of assembly, homodimer.

The protein resides in the cytoplasm. It carries out the reaction alpha-D-mannose 1-phosphate = D-mannose 6-phosphate. The protein operates within nucleotide-sugar biosynthesis; GDP-alpha-D-mannose biosynthesis; alpha-D-mannose 1-phosphate from D-fructose 6-phosphate: step 2/2. In terms of biological role, involved in the synthesis of the GDP-mannose and dolichol-phosphate-mannose required for a number of critical mannosyl transfer reactions. The sequence is that of Probable phosphomannomutase from Caenorhabditis elegans.